The primary structure comprises 1387 residues: MSSLVSTPFTTATGVQKKLGAPVPLHSFLLSRRQPAAGAGRGRAAAAAIRCAVAGNGLFTQTKPEVRRVVPPEGDASRRGVPRVKVVYVVLEAQYQSSVTAAVRELNADPRRAAGFEVVGYLVEELRDEETYKTFCADLADANVFIGSLIFVEELALKVKDAVEKERDRMDAVLVFPSMPEVMRLNKLGSFSMSQLGQSKSPFFQLFKRKKNSGGFADSMLKLVRTLPKVLKYLPSDKAQDARLYILSLQFWLGGSPDNLQNFLKMIAVSYVPALKGADIKYDDPVLFLDAGIWHPLAPTMYDDVKEYLNWYGTRRDTNDKLKDPNAPVIGLVLQRSHIVTGDDGHYVAVIMELEAKGAKVIPIFAGGLDFSGPTQRYLVDPITGKPFVNAVVSLTGFALVGGPARQDHPKAIAALQKLDVPYIVALPLVFQTTEEWLNSTLGLHPIQVALQVALPELDGGMEPIVFAGRDPRTGKSHALHKRVEQLCTRAIRWAELKRKTKEEKKLAITVFSFPPDKGNVGTAAYLNVFNSIYSVLQDLKKDGYNVEGLPDTAEALIEEVIHDKEAQFNSPNLNVAYRMNVREYQSLTSYASLLEENWGKPPGNLNSDGENLLVYGKQYGNVFIGVQPTFGYEGDPMRLLFSKSASPHHGFAAYYTFVEKIFQADAVLHFGTHGSLEFMPGKQVGMSDACYPDSLIGNIPNIYYYAANNPSEATVAKRRSYANTISYLTPPAENAGLYKGLKQLSELISSYQSLKDTGRGPQIVSSIISTAKQCNLDKDVPLPEEGVELPPNERDLIVGKVYAKIMEIESRLLPCGLHVIGEPPSAIEAVATLVNIASLDRPEDEIYSLPNILAQTVGRNIEDVYRGSDKGILADVELLRQITEASRGAITAFVERTTNNKGQVVDVTNKLSTMLGFGLSEPWVQHLSKTKFIRADREKLRTLFTFLGECLKLIVADNELGSLKLALEGSYVEPGPGGDPIRNPKVLPTGKNIHALDPQAIPTTAALKSAKIVVDRLLERQKVDNGGKYPETIALVLWGTDNIKTYGESLAQVLWMIGVRPVADTFGRVNRVEPVSLEELGRPRIDVVVNCSGVFRDLFINQMNLLDRAVKMVAELDEPEEMNYVRKHAQEQARELGVSLREAATRVFSNASGSYSSNVNLAVENASWTDEKQLQDMYLSRKSFAFDCDAPGAGMREQRKTFELALATADATFQNLDSSEISLTDVSHYFDSDPTKLVQGLRKDGRAPSSYIADTTTANAQVRTLSETVRLDARTKLLNPKWYEGMMKSGYEGVREIEKRLTNTVGWSATSGQVDNWVYEEANATFIEDEAMRKRLMDTNPNSFRKLVQTFLEASGRGYWETSEENLEKLRELYSEVEDKIEGIDR.

A chloroplast-targeting transit peptide spans Met-1–Arg-50.

It belongs to the Mg-chelatase subunit H family. In terms of assembly, the magnesium chelatase complex is a heterotrimer consisting of subunits CHLI, CHLD and CHLH.

The protein localises to the plastid. It localises to the chloroplast stroma. Its subcellular location is the chloroplast membrane. It carries out the reaction protoporphyrin IX + Mg(2+) + ATP + H2O = Mg-protoporphyrin IX + ADP + phosphate + 3 H(+). Its pathway is porphyrin-containing compound metabolism; chlorophyll biosynthesis. Involved in chlorophyll biosynthesis. Catalyzes the insertion of magnesium ion into protoporphyrin IX to yield Mg-protoporphyrin IX. The reaction takes place in two steps, with an ATP-dependent activation followed by an ATP-dependent chelation step. May be involved in the plastid-to-nucleus retrograde signaling. This is Magnesium-chelatase subunit ChlH, chloroplastic (CHLH) from Oryza sativa subsp. indica (Rice).